The sequence spans 487 residues: UL37 immediate early glycoprotein (487 aa).

A signal peptide spans 1–22 (MSPVYVNLLGSVGLLAFWYFSY). A compositionally biased stretch (acidic residues) spans 83 to 107 (GEESVTEDTEREDTEEEREDEEEEN). Residues 83–121 (GEESVTEDTEREDTEEEREDEEEENEARTPEVNPIDAEG) are disordered. N-linked (GlcNAc...) asparagine; by host glycosylation is found at N206, N210, N219, N223, N242, N246, N275, N281, N294, N297, N306, N333, N337, N343, N379, N384, and N391. A helical membrane pass occupies residues 433 to 459 (WALLSICTVAAGSIALLSLFCILLIGL).

Belongs to the immediate early glycoprotein family. As to quaternary structure, interacts with host BAX. Interacts with host RSAD2/viperin; this interaction results in RSAD2/viperin relocalization from the endoplasmic reticulum to the mitochondria, actin cytoskeleton disruption and enhancement of infection. Interacts with host PEX19; this interaction inhibits the peroxisomal-dependent antiviral signaling. Interacts with host CHCHD6; this interaction rewires mitochondria by engaging the conserved MICOS complex.

The protein resides in the host endoplasmic reticulum membrane. The protein localises to the host Golgi apparatus membrane. Its subcellular location is the host mitochondrion membrane. It is found in the host peroxisome. Multifunctional transmembrane protein that plays several key roles in viral replication. Rapidely traffics from the host endoplasmic reticulum to the outer mitochondrial membrane where it acts to inhibit host immune response, block apoptotic signaling, regulate calcium flux, and induce mitochondrial fragmentation. Sequesters proapoptotic BAX at the outer mitochondrial membrane and prevents cytochrome c release and subsequent initiation of the proapoptotic cascade. Also provoques a calcium efflux from host endoplasmic reticulum and F-actin cytoskeleton disruption. Participates in the increase of host mitochondrial biogenesis, thus promoting viral replication by efficient use of newly made mitochondria. Additionally, a subset of vMIA localizes to peroxisomes, causing fragmentation and blocking peroxisomal MAVS signaling. Mechanistically, inhibits host MAVS oligomerization at peroxisomes in a mitochondrial fission factors (MFF)-dependent manner and in mitochondria independently of mitochondrial fission factors. Plays an essential role in the trafficking of host viperin/RSAD2 from the endoplasmic reticulum to the viral assembly compartment via the mitochondria during viral infection as failure of viperin to localize to the mitochondria results in insufficient lipogenesis and thus reduces viral replication. In terms of biological role, may play a role in escape from the host antiviral response. The chain is UL37 immediate early glycoprotein (UL37) from Human cytomegalovirus (strain AD169) (HHV-5).